We begin with the raw amino-acid sequence, 155 residues long: Ribosomal RNA large subunit methyltransferase H (155 aa).

Residues Leu-72, Gly-103, and 122 to 127 (LSDLTL) each bind S-adenosyl-L-methionine.

Belongs to the RNA methyltransferase RlmH family. In terms of assembly, homodimer.

The protein localises to the cytoplasm. The enzyme catalyses pseudouridine(1915) in 23S rRNA + S-adenosyl-L-methionine = N(3)-methylpseudouridine(1915) in 23S rRNA + S-adenosyl-L-homocysteine + H(+). In terms of biological role, specifically methylates the pseudouridine at position 1915 (m3Psi1915) in 23S rRNA. The chain is Ribosomal RNA large subunit methyltransferase H from Paracidovorax citrulli (strain AAC00-1) (Acidovorax citrulli).